The following is a 290-amino-acid chain: Bifunctional protein FolD (290 aa).

Residues 166–168 (GAS) and I232 each bind NADP(+).

It belongs to the tetrahydrofolate dehydrogenase/cyclohydrolase family. In terms of assembly, homodimer.

The catalysed reaction is (6R)-5,10-methylene-5,6,7,8-tetrahydrofolate + NADP(+) = (6R)-5,10-methenyltetrahydrofolate + NADPH. It catalyses the reaction (6R)-5,10-methenyltetrahydrofolate + H2O = (6R)-10-formyltetrahydrofolate + H(+). It participates in one-carbon metabolism; tetrahydrofolate interconversion. In terms of biological role, catalyzes the oxidation of 5,10-methylenetetrahydrofolate to 5,10-methenyltetrahydrofolate and then the hydrolysis of 5,10-methenyltetrahydrofolate to 10-formyltetrahydrofolate. In Proteus mirabilis (strain HI4320), this protein is Bifunctional protein FolD.